The chain runs to 234 residues: Synaptogyrin-1 (234 aa).

An N-acetylmethionine modification is found at M1. The Cytoplasmic portion of the chain corresponds to 1 to 23; the sequence is MEGGAYGAGKAGGAFDPYALVRQ. Residues 20 to 173 enclose the MARVEL domain; it reads LVRQPHTILR…QAVLAFQRYQ (154 aa). Residues 24-44 traverse the membrane as a helical segment; that stretch reads PHTILRVVSWLFSIVVFGSIV. The Lumenal segment spans residues 45 to 71; sequence NEGYLNSASEGEEFCIYNRNPNACSYG. The chain crosses the membrane as a helical span at residues 72–92; that stretch reads VAVGVLAFLTCLLYLALDVYF. At 93–103 the chain is on the cytoplasmic side; it reads PQISSVKDRKK. A helical transmembrane segment spans residues 104–124; that stretch reads AVLSDIGVSAFWAFLWFVGFC. Over 125–148 the chain is Lumenal; it reads YLANQWQVSKPKDNPLNEGTDAAR. Residues 149–169 traverse the membrane as a helical segment; it reads AAIAFSFFSIFTWAGQAVLAF. Residues 170-234 are Cytoplasmic-facing; sequence QRYQIGADSA…EPQGYQSQGY (65 aa). The segment at 192–234 is disordered; the sequence is SSMPYAPYVEPSTGPDPAGMGGTYQQPANTFDTEPQGYQSQGY. A compositionally biased stretch (polar residues) spans 214-234; that stretch reads TYQQPANTFDTEPQGYQSQGY.

It belongs to the synaptogyrin family.

It is found in the cytoplasmic vesicle. The protein resides in the secretory vesicle. The protein localises to the synaptic vesicle membrane. Its subcellular location is the melanosome. May play a role in regulated exocytosis. Modulates the localization of synaptophysin/SYP into synaptic-like microvesicles and may therefore play a role in synaptic-like microvesicle formation and/or maturation. Involved in the regulation of short-term and long-term synaptic plasticity. This chain is Synaptogyrin-1, found in Pongo abelii (Sumatran orangutan).